The primary structure comprises 621 residues: Protein Tra (621 aa).

Residues 126 to 146 (GAWPVAGSLALIAANVAALVI) form a helical membrane-spanning segment. Residues 275–465 (GEPVQVPLGR…LALSTSGESR (191 aa)) enclose the FtsK domain. Residue 290–297 (GTSGSGKS) participates in ATP binding. The chain crosses the membrane as a helical span at residues 564–584 (VAAAIGTGATTVADVATVTGI).

It is found in the cell membrane. In terms of biological role, major protein required for plasmid transfer. In Streptomyces lividans, this protein is Protein Tra (tra).